The following is a 494-amino-acid chain: Solute carrier family 2, facilitated glucose transporter member 3 (494 aa).

Topologically, residues 1–10 are cytoplasmic; the sequence is MGTTKVTTPL. Residues 11-32 traverse the membrane as a helical segment; it reads IFAISIATIGSFQFGYNTGVIN. At 33–64 the chain is on the extracellular side; sequence APEAIIKDFLNYTLEERSETPPSSVLLTSLWS. N-linked (GlcNAc...) asparagine glycosylation is present at Asn43. A helical membrane pass occupies residues 65 to 85; it reads LSVAIFSVGGMIGSFSVGLFV. Residues 86 to 90 lie on the Cytoplasmic side of the membrane; it reads NRFGR. Residues 91–111 traverse the membrane as a helical segment; it reads RNSMLIVNLLAIAGGCLMGFC. At 112-118 the chain is on the extracellular side; the sequence is KIAESVE. Residues 119–142 form a helical membrane-spanning segment; it reads MLILGRLIIGLFCGLCTGFVPMYI. Over 143–153 the chain is Cytoplasmic; sequence GEISPTALRGA. A helical transmembrane segment spans residues 154–174; sequence FGTLNQLGIVIGILVAQIFGL. Position 159 (Gln159) interacts with D-glucose. The Extracellular portion of the chain corresponds to 175–183; sequence KVILGTEDL. Residues 184–204 form a helical membrane-spanning segment; the sequence is WPLLLGFTILPAIIQCAALPF. The Cytoplasmic segment spans residues 205 to 269; sequence CPESPRFLLI…LFRAPNYRQP (65 aa). Thr232 carries the post-translational modification Phosphothreonine. Residues 270–290 form a helical membrane-spanning segment; the sequence is IIISIMLQLSQQLSGINAVFY. The important for selectivity against fructose stretch occupies residues 277 to 279; it reads QLS. D-glucose is bound by residues 280-281 and Asn286; that span reads QQ. Topologically, residues 291-304 are extracellular; sequence YSTGIFKDAGVQEP. The helical transmembrane segment at 305–325 threads the bilayer; sequence VYATIGAGVVNTIFTVVSVFL. Asn315 contributes to the D-glucose binding site. Topologically, residues 326–331 are cytoplasmic; sequence VERAGR. The helical transmembrane segment at 332–352 threads the bilayer; the sequence is RTLHLIGLGGMAFCSILMTIS. Over 353-363 the chain is Extracellular; the sequence is LLLKDNYSWMS. A helical membrane pass occupies residues 364 to 389; that stretch reads FICIGAILVFVAFFEIGPGPIPWFIV. D-glucose is bound by residues Glu378 and Trp386. The Cytoplasmic segment spans residues 390-399; it reads AELFGQGPRP. Residues 400 to 420 form a helical membrane-spanning segment; it reads AAMAVAGCSNWTSNFLVGLLF. At 421 to 429 the chain is on the extracellular side; it reads PSATFYLGA. The chain crosses the membrane as a helical span at residues 430 to 450; it reads YVFIVFTVFLVIFWVFTFFKV. Over 451 to 494 the chain is Cytoplasmic; the sequence is PETRGRTFEEITRAFEGQVQTGTRGEKGPIMEMNSIQPTKDTNA. Positions 473–494 are disordered; that stretch reads TRGEKGPIMEMNSIQPTKDTNA. The segment covering 484–494 has biased composition (polar residues); the sequence is NSIQPTKDTNA. Ser485 carries the post-translational modification Phosphoserine. The residue at position 492 (Thr492) is a Phosphothreonine.

It belongs to the major facilitator superfamily. Sugar transporter (TC 2.A.1.1) family. Glucose transporter subfamily. In terms of assembly, interacts with SMIM43; the interaction may promote SLC2A3-mediated glucose transport to meet the energy needs of mesendoderm differentiation. Detected in placenta.

It is found in the cell membrane. Its subcellular location is the perikaryon. The protein resides in the cell projection. It carries out the reaction D-glucose(out) = D-glucose(in). The enzyme catalyses D-galactose(in) = D-galactose(out). Deoxyglucose transport is inhibited by D-glucose, D-galactose and maltose. Galactose transport is inhibited by D-glucose and maltose. Its function is as follows. Facilitative glucose transporter. Can also mediate the uptake of various other monosaccharides across the cell membrane. Mediates the uptake of glucose, 2-deoxyglucose, galactose, mannose, xylose and fucose, and probably also dehydroascorbate. Does not mediate fructose transport. Required for mesendoderm differentiation. The polypeptide is Solute carrier family 2, facilitated glucose transporter member 3 (Ovis aries (Sheep)).